The following is a 2495-amino-acid chain: Zinc finger protein 462 (2495 aa).

3 consecutive C2H2-type zinc fingers follow at residues 4-27 (LQCD…QDVH), 108-131 (FQCK…RKVH), and 162-185 (FSCQ…KMYH). A Glycyl lysine isopeptide (Lys-Gly) (interchain with G-Cter in SUMO1); alternate cross-link involves residue Lys-20. Lys-20 is covalently cross-linked (Glycyl lysine isopeptide (Lys-Gly) (interchain with G-Cter in SUMO2); alternate). Residues 215–241 (PCKELPAEVVERSILESMVKPLTKSRG) form an interaction with PBX1 region. Glycyl lysine isopeptide (Lys-Gly) (interchain with G-Cter in SUMO2) cross-links involve residues Lys-234 and Lys-271. 3 disordered regions span residues 278–301 (QQEG…NSTY), 329–357 (RPNS…NSGL), and 370–395 (DMTN…DLNE). Positions 332–343 (SSSTSKFSSSMS) are enriched in low complexity. Residues Lys-337, Lys-348, and Lys-350 each participate in a glycyl lysine isopeptide (Lys-Gly) (interchain with G-Cter in SUMO2) cross-link. A phosphoserine mark is found at Ser-351 and Ser-355. Polar residues predominate over residues 370 to 387 (DMTNSSADLDTNSMLNDS). Lys-429 participates in a covalent cross-link: Glycyl lysine isopeptide (Lys-Gly) (interchain with G-Cter in SUMO2). C2H2-type zinc fingers lie at residues 440-463 (FQCP…ENIH) and 471-493 (YKCD…KQCH). A Glycyl lysine isopeptide (Lys-Gly) (interchain with G-Cter in SUMO2) cross-link involves residue Lys-485. The disordered stretch occupies residues 492 to 590 (CHTGTSDWDT…PQPPTQAPPL (99 aa)). A compositionally biased stretch (polar residues) spans 493–502 (HTGTSDWDTV). The span at 503–515 (NSQSESLSSSLNE) shows a compositional bias: low complexity. The segment covering 542–590 (PPQPPPPLPPPPPPPSQPLPQPPPPPLQSPHQVPPPTQQPQPPTQAPPL) has biased composition (pro residues). The C2H2-type 6 zinc-finger motif lies at 593 to 616 (YKCTMCSYSTMTLKGLRVHQQHKH). Glycyl lysine isopeptide (Lys-Gly) (interchain with G-Cter in SUMO2) cross-links involve residues Lys-624, Lys-650, and Lys-661. Residues 629 to 654 (PSSLPLENETDSHPSSSNTVKKSQTS) are disordered. Over residues 641 to 654 (HPSSSNTVKKSQTS) the composition is skewed to polar residues. Ser-681 is modified (phosphoserine). A Glycyl lysine isopeptide (Lys-Gly) (interchain with G-Cter in SUMO2) cross-link involves residue Lys-699. C2H2-type zinc fingers lie at residues 835–858 (YYCK…QRMH), 878–900 (YRCL…YGEH), and 917–940 (YRCR…QRMH). Lys-978 is covalently cross-linked (Glycyl lysine isopeptide (Lys-Gly) (interchain with G-Cter in SUMO2)). The tract at residues 980–999 (MATSTPVARGGGLPATFNKN) is disordered. The C2H2-type 10 zinc finger occupies 1023–1046 (YDCDVCSFASPNMHSVLVHYQKKH). Ser-1083 carries the phosphoserine modification. Lys-1128 participates in a covalent cross-link: Glycyl lysine isopeptide (Lys-Gly) (interchain with G-Cter in SUMO2). Ser-1159 carries the post-translational modification Phosphoserine. Residues Lys-1196, Lys-1204, Lys-1210, and Lys-1232 each participate in a glycyl lysine isopeptide (Lys-Gly) (interchain with G-Cter in SUMO2) cross-link. 2 C2H2-type zinc fingers span residues 1254 to 1277 (LKCR…KKDH) and 1459 to 1482 (YQCT…GKKH). Lys-1488 is covalently cross-linked (Glycyl lysine isopeptide (Lys-Gly) (interchain with G-Cter in SUMO2)). A C2H2-type 13 zinc finger spans residues 1504 to 1527 (YKCRHCPYINTRIHGVLTHYQKRH). Glycyl lysine isopeptide (Lys-Gly) (interchain with G-Cter in SUMO2) cross-links involve residues Lys-1560 and Lys-1580. 3 consecutive C2H2-type zinc fingers follow at residues 1566 to 1589 (YRCK…EKYH), 1649 to 1672 (FRCQ…RIKH), and 1686 to 1709 (FKCA…QKRH). Residues Lys-1687 and Lys-1769 each participate in a glycyl lysine isopeptide (Lys-Gly) (interchain with G-Cter in SUMO2) cross-link. Residues 1881-1903 (FQCKHCDSKLQSIAELTSHLNIH) form a C2H2-type 17 zinc finger. Lys-1935 participates in a covalent cross-link: Glycyl lysine isopeptide (Lys-Gly) (interchain with G-Cter in SUMO2). The C2H2-type 18; degenerate zinc-finger motif lies at 1957–1981 (YKCKFCVEVHPTLRAICNHLRKHVQ). Position 1993 is an N6-methyllysine (Lys-1993). C2H2-type zinc fingers lie at residues 2014–2037 (YSCQ…QTHH), 2043–2066 (FRCK…LKAH), and 2072–2095 (YKCS…LKVH). Lys-2093 is covalently cross-linked (Glycyl lysine isopeptide (Lys-Gly) (interchain with G-Cter in SUMO2)). Composition is skewed to polar residues over residues 2112 to 2121 (SHAHPSSQKA) and 2132 to 2149 (DSSY…NHYQ). The disordered stretch occupies residues 2112 to 2172 (SHAHPSSQKA…VPPSGTAAGT (61 aa)). Phosphoserine is present on residues Ser-2161 and Ser-2166. C2H2-type zinc fingers lie at residues 2180–2203 (LHCE…RDKH), 2209–2232 (FKCK…EAGH), and 2243–2265 (LRCP…IVLH). Lys-2282 is covalently cross-linked (Glycyl lysine isopeptide (Lys-Gly) (interchain with G-Cter in SUMO2)). 2 C2H2-type zinc fingers span residues 2289 to 2311 (FRCD…IEKH) and 2317 to 2340 (YKCQ…RDEH). Residues 2361–2387 (KEKIESSSSEDEDKDDEMSSKAEDREL) form a disordered region. Residues 2377–2387 (EMSSKAEDREL) show a composition bias toward basic and acidic residues. The C2H2-type 27 zinc finger occupies 2403–2425 (FPCEFCGRAFSQGSEWERHVLRH). Lys-2493 is covalently cross-linked (Glycyl lysine isopeptide (Lys-Gly) (interchain with G-Cter in SUMO2)).

In terms of assembly, interacts with PBX1 isoform PBX1b; this interaction prevents PBX1-HOXA9 heterodimer from forming and binding to DNA. Expressed in the cerebral cortex (at protein level). Expressed in embryonic stem cells (at protein level). Expressed in heart, liver, kidney, muscle, and female and male genital tracts (at protein level).

Its subcellular location is the nucleus. Functionally, zinc finger nuclear factor involved in transcription by regulating chromatin structure and organization. Involved in the pluripotency and differentiation of embryonic stem cells by regulating SOX2, POU5F1/OCT4, and NANOG. By binding PBX1, prevents the heterodimerization of PBX1 and HOXA9 and their binding to DNA. Regulates neuronal development and neural cell differentiation. The sequence is that of Zinc finger protein 462 from Mus musculus (Mouse).